Here is a 383-residue protein sequence, read N- to C-terminus: Large ribosomal subunit protein uL2m (383 aa).

Disordered stretches follow at residues 97 to 122 (FPKK…GGGH) and 322 to 357 (MNAN…YKTR). Composition is skewed to basic residues over residues 106–122 (GRNH…GGGH) and 330–340 (GGGRGKSKGNR).

The protein belongs to the universal ribosomal protein uL2 family. As to quaternary structure, component of the mitochondrial large ribosomal subunit (mt-LSU). Mature N.crassa 74S mitochondrial ribosomes consist of a small (37S) and a large (54S) subunit. The 37S small subunit contains a 16S ribosomal RNA (16S mt-rRNA) and 32 different proteins. The 54S large subunit contains a 23S rRNA (23S mt-rRNA) and 42 different proteins.

The protein localises to the mitochondrion. Functionally, component of the mitochondrial ribosome (mitoribosome), a dedicated translation machinery responsible for the synthesis of mitochondrial genome-encoded proteins, including at least some of the essential transmembrane subunits of the mitochondrial respiratory chain. The mitoribosomes are attached to the mitochondrial inner membrane and translation products are cotranslationally integrated into the membrane. The polypeptide is Large ribosomal subunit protein uL2m (rml2) (Neurospora crassa (strain ATCC 24698 / 74-OR23-1A / CBS 708.71 / DSM 1257 / FGSC 987)).